The primary structure comprises 230 residues: Ribosome maturation factor RimM (230 aa).

A PRC barrel domain is found at 149-230 (ADEFYWVDLI…RVVVDWEADY (82 aa)).

This sequence belongs to the RimM family. Binds ribosomal protein uS19.

The protein localises to the cytoplasm. Functionally, an accessory protein needed during the final step in the assembly of 30S ribosomal subunit, possibly for assembly of the head region. Essential for efficient processing of 16S rRNA. May be needed both before and after RbfA during the maturation of 16S rRNA. It has affinity for free ribosomal 30S subunits but not for 70S ribosomes. The protein is Ribosome maturation factor RimM of Burkholderia mallei (strain NCTC 10229).